Consider the following 246-residue polypeptide: MKKPPVPLLQGGVRADGRAPDQMREVQISVGVISNADGSAMVSYGATTAVAAVYGPREMHPRHLSLPDRGVMRVRYHMAPFSTKDERKSPTPSRREIEISKVLREALEPAVMLEQYPRSRIDVFIEILQADGSTRVASLTAASLALADAGIYMRDLVIGVSVGLVDGTVVLDLNGLEDQYGEGDLPVGYMPNLRRYTLLQLDGAWGRDKLLEALNLAVKGAEFVYQKARDALKNRYMAIAEEIYGR.

Belongs to the RNase PH family. Rrp41 subfamily. As to quaternary structure, component of the archaeal exosome complex. Forms a hexameric ring-like arrangement composed of 3 Rrp41-Rrp42 heterodimers. The hexameric ring associates with a trimer of Rrp4 and/or Csl4 subunits.

It localises to the cytoplasm. In terms of biological role, catalytic component of the exosome, which is a complex involved in RNA degradation. Has 3'-&gt;5' exoribonuclease activity. Can also synthesize heteromeric RNA-tails. This is Exosome complex component Rrp41 from Pyrobaculum neutrophilum (strain DSM 2338 / JCM 9278 / NBRC 100436 / V24Sta) (Thermoproteus neutrophilus).